The primary structure comprises 427 residues: Serine hydroxymethyltransferase (427 aa).

(6S)-5,6,7,8-tetrahydrofolate contacts are provided by residues Leu-117 and 121–123 (GHL). Lys-226 is subject to N6-(pyridoxal phosphate)lysine.

It belongs to the SHMT family. Homodimer. Pyridoxal 5'-phosphate serves as cofactor.

The protein localises to the cytoplasm. It catalyses the reaction (6R)-5,10-methylene-5,6,7,8-tetrahydrofolate + glycine + H2O = (6S)-5,6,7,8-tetrahydrofolate + L-serine. It carries out the reaction L-threonine = acetaldehyde + glycine. The catalysed reaction is L-allo-threonine = acetaldehyde + glycine. It functions in the pathway one-carbon metabolism; tetrahydrofolate interconversion. Its pathway is amino-acid biosynthesis; glycine biosynthesis; glycine from L-serine: step 1/1. Its function is as follows. Its primary function is to catalyze the reversible interconversion of serine and glycine with tetrahydrofolate (THF) serving as the one-carbon carrier. This reaction serves as the major source of one-carbon groups required for the biosynthesis of purines, thymidylate, methionine, and other important biomolecules. Also exhibits THF-independent aldolase activity toward beta-hydroxyamino acids, producing glycine and aldehydes, via a retro-aldol mechanism. Thus, is able to catalyze the cleavage of L-threonine, L-allo-threonine, L-threo-beta-phenylserine and L-erythro-beta-phenylserine. This second activity is likely to be physiological in H.thermophilus, which is an organism that lacks the ortholog gene for the 'real' threonine aldolase characterized in mesophilic bacteria (LtaE), yeast and plants. The protein is Serine hydroxymethyltransferase of Hydrogenobacter thermophilus (strain DSM 6534 / IAM 12695 / TK-6).